A 267-amino-acid chain; its full sequence is Phosphatidylglycerol--prolipoprotein diacylglyceryl transferase (267 aa).

Transmembrane regions (helical) follow at residues 17 to 37 (LNIR…WLLA), 56 to 76 (LVTY…TLFY), 91 to 111 (IWNG…AIWL), 120 to 140 (LFEV…AGRL), 173 to 193 (QLYE…LFSA), 199 to 219 (MAVS…VEFF), and 236 to 256 (MGQI…GFAM). Arg-139 contacts a 1,2-diacyl-sn-glycero-3-phospho-(1'-sn-glycerol).

The protein belongs to the Lgt family.

It localises to the cell inner membrane. It catalyses the reaction L-cysteinyl-[prolipoprotein] + a 1,2-diacyl-sn-glycero-3-phospho-(1'-sn-glycerol) = an S-1,2-diacyl-sn-glyceryl-L-cysteinyl-[prolipoprotein] + sn-glycerol 1-phosphate + H(+). The protein operates within protein modification; lipoprotein biosynthesis (diacylglyceryl transfer). Its function is as follows. Catalyzes the transfer of the diacylglyceryl group from phosphatidylglycerol to the sulfhydryl group of the N-terminal cysteine of a prolipoprotein, the first step in the formation of mature lipoproteins. This Oleidesulfovibrio alaskensis (strain ATCC BAA-1058 / DSM 17464 / G20) (Desulfovibrio alaskensis) protein is Phosphatidylglycerol--prolipoprotein diacylglyceryl transferase.